Reading from the N-terminus, the 340-residue chain is 3-isopropylmalate dehydrogenase (340 aa).

Substrate is bound by residues Arg-88, Arg-98, Arg-122, and Asp-212. 3 residues coordinate Mg(2+): Asp-212, Asp-236, and Asp-240. Residue Gly-272 to Asp-284 participates in NAD(+) binding.

The protein belongs to the isocitrate and isopropylmalate dehydrogenases family. LeuB type 2 subfamily. In terms of assembly, homodimer. The cofactor is Mg(2+). Mn(2+) serves as cofactor.

Its subcellular location is the cytoplasm. It carries out the reaction (2R,3S)-3-isopropylmalate + NAD(+) = 4-methyl-2-oxopentanoate + CO2 + NADH. The protein operates within amino-acid biosynthesis; L-leucine biosynthesis; L-leucine from 3-methyl-2-oxobutanoate: step 3/4. Functionally, catalyzes the oxidation of 3-carboxy-2-hydroxy-4-methylpentanoate (3-isopropylmalate) to 3-carboxy-4-methyl-2-oxopentanoate. The product decarboxylates to 4-methyl-2 oxopentanoate. The protein is 3-isopropylmalate dehydrogenase of Corynebacterium efficiens (strain DSM 44549 / YS-314 / AJ 12310 / JCM 11189 / NBRC 100395).